Reading from the N-terminus, the 94-residue chain is Late cornified envelope protein 3C (94 aa).

Residues 1-10 (MSCQQNQQQC) are compositionally biased toward low complexity. Disordered regions lie at residues 1 to 35 (MSCQQNQQQCQPPPSCPSPKCPPKSPAQCLPPPSS) and 65 to 94 (CRRQRSNSCDRGSGQQGGGSCRGHGSGGCC). Positions 11-34 (QPPPSCPSPKCPPKSPAQCLPPPS) are enriched in pro residues. Residues 78–94 (GQQGGGSCRGHGSGGCC) show a composition bias toward gly residues.

Belongs to the LCE family. Interacts with CYSRT1; the interaction is direct. Skin-specific. Expression was readily detected in adult trunk skin, adult arm skin, fetal skin, penal skin, vulva, esophagus and tongue. Not expressed in the cervix, rectum, lung, colon, or placenta.

A structural component of the cornified envelope of the stratum corneum involved in innate cutaneous host defense. Possesses defensin-like antimicrobial activity against a broad spectrum of Gram-positive and Gram-negative bacteria, both aerobic and anaerobic species. Upon inflammation, may regulate skin barrier repair by shaping cutaneous microbiota composition and immune response to bacterial antigens. The chain is Late cornified envelope protein 3C from Homo sapiens (Human).